Consider the following 275-residue polypeptide: 2,3,4,5-tetrahydropyridine-2,6-dicarboxylate N-succinyltransferase (275 aa).

2 residues coordinate substrate: Arg-104 and Asp-141.

It belongs to the transferase hexapeptide repeat family. In terms of assembly, homotrimer.

The protein localises to the cytoplasm. It catalyses the reaction (S)-2,3,4,5-tetrahydrodipicolinate + succinyl-CoA + H2O = (S)-2-succinylamino-6-oxoheptanedioate + CoA. Its pathway is amino-acid biosynthesis; L-lysine biosynthesis via DAP pathway; LL-2,6-diaminopimelate from (S)-tetrahydrodipicolinate (succinylase route): step 1/3. The chain is 2,3,4,5-tetrahydropyridine-2,6-dicarboxylate N-succinyltransferase from Tolumonas auensis (strain DSM 9187 / NBRC 110442 / TA 4).